Here is a 99-residue protein sequence, read N- to C-terminus: Large ribosomal subunit protein uL23 (99 aa).

It belongs to the universal ribosomal protein uL23 family. In terms of assembly, part of the 50S ribosomal subunit. Contacts protein L29, and trigger factor when it is bound to the ribosome.

Its function is as follows. One of the early assembly proteins it binds 23S rRNA. One of the proteins that surrounds the polypeptide exit tunnel on the outside of the ribosome. Forms the main docking site for trigger factor binding to the ribosome. The chain is Large ribosomal subunit protein uL23 from Magnetococcus marinus (strain ATCC BAA-1437 / JCM 17883 / MC-1).